The primary structure comprises 187 residues: UPF0301 protein plu1183 (187 aa).

This sequence belongs to the UPF0301 (AlgH) family.

In Photorhabdus laumondii subsp. laumondii (strain DSM 15139 / CIP 105565 / TT01) (Photorhabdus luminescens subsp. laumondii), this protein is UPF0301 protein plu1183.